The following is a 455-amino-acid chain: Beta-cyclopiazonate dehydrogenase (455 aa).

An N-terminal signal peptide occupies residues 1–25 (MAVRIARFLGLSTVAYLALANGIDA).

This sequence belongs to the beta-cyclopiazonate dehydrogenase family. Requires FAD as cofactor.

It carries out the reaction beta-cyclopiazonate + A = alpha-cyclopiazonate + AH2. Beta-cyclopiazonate dehydrogenase involved in the synthesis of the fungal neurotoxin alpha-cyclopiazonic acid (CPA). CpaO carries out the dehydrogenation of beta-CPA to yield an unstable enimine product, which is captured by intramolecular cyclization to create the pentacyclic fused scaffold of alpha-cyclopiazonate. The polypeptide is Beta-cyclopiazonate dehydrogenase (Aspergillus oryzae (strain ATCC 42149 / RIB 40) (Yellow koji mold)).